Here is a 257-residue protein sequence, read N- to C-terminus: 7-carboxy-7-deazaguanine synthase (257 aa).

Positions 1-25 (MKSVDHPVDVLPAEHSAETPGDARA) are disordered. Substrate-binding positions include 39–41 (RQG) and arginine 54. Residues 45 to 244 (LTGTESVFIR…AISRGYQYCD (200 aa)) form the Radical SAM core domain. Positions 58, 62, and 65 each coordinate [4Fe-4S] cluster. Position 67 (threonine 67) interacts with Mg(2+). Substrate is bound at residue threonine 99. S-adenosyl-L-methionine is bound by residues glycine 101 and 143–145 (SPK).

It belongs to the radical SAM superfamily. 7-carboxy-7-deazaguanine synthase family. In terms of assembly, homodimer. [4Fe-4S] cluster is required as a cofactor. S-adenosyl-L-methionine serves as cofactor. Requires Mg(2+) as cofactor.

It carries out the reaction 6-carboxy-5,6,7,8-tetrahydropterin + H(+) = 7-carboxy-7-deazaguanine + NH4(+). It functions in the pathway purine metabolism; 7-cyano-7-deazaguanine biosynthesis. Its function is as follows. Catalyzes the complex heterocyclic radical-mediated conversion of 6-carboxy-5,6,7,8-tetrahydropterin (CPH4) to 7-carboxy-7-deazaguanine (CDG), a step common to the biosynthetic pathways of all 7-deazapurine-containing compounds. The sequence is that of 7-carboxy-7-deazaguanine synthase from Rhodopirellula baltica (strain DSM 10527 / NCIMB 13988 / SH1).